The primary structure comprises 248 residues: MSQLEKIYGVHAVQALLQHHPKRVKQIWLSEGRSEPRLETLLALAAENRVPVGQAERREMDAWVEGVHQGVVAEVSPSQVWGELMLEELLERTETPPLILVLDGVTDPHNLGACLRTADAAGATAVIVPKDKSATLTPVVRKVACGAAEVIPLVAVTNLARTLEKLQQRGLWVVGTAGEAEQEIYQQDLTGPLVMIMGAEGKGMRRLTREHCDFLVKLPMAGSVSSLNVSVATGVCLFEAVRQRQVKR.

S-adenosyl-L-methionine is bound by residues Gly-198, Leu-218, and Leu-227.

The protein belongs to the class IV-like SAM-binding methyltransferase superfamily. RNA methyltransferase TrmH family. RlmB subfamily.

It is found in the cytoplasm. It carries out the reaction guanosine(2251) in 23S rRNA + S-adenosyl-L-methionine = 2'-O-methylguanosine(2251) in 23S rRNA + S-adenosyl-L-homocysteine + H(+). Functionally, specifically methylates the ribose of guanosine 2251 in 23S rRNA. This chain is 23S rRNA (guanosine-2'-O-)-methyltransferase RlmB, found in Pseudomonas putida (strain ATCC 47054 / DSM 6125 / CFBP 8728 / NCIMB 11950 / KT2440).